The primary structure comprises 285 residues: BAG family molecular chaperone regulator 2 (285 aa).

The Ubiquitin-like domain maps to 37–113; that stretch reads RGIRVRVKYG…LILIEDPISQ (77 aa). A BAG domain is found at 132–210; sequence AISDISFQVE…KYVEALDLLK (79 aa). Ser244 is subject to Phosphoserine.

In terms of assembly, binds to the ATPase domain of HSP70/HSC70 chaperones.

Functionally, co-chaperone that regulates diverse cellular pathways, such as programmed cell death and stress responses. The polypeptide is BAG family molecular chaperone regulator 2 (BAG2) (Arabidopsis thaliana (Mouse-ear cress)).